Reading from the N-terminus, the 295-residue chain is Tyrosine recombinase XerC (295 aa).

Positions 1–85 (MQTYLQKYWN…ALRQFLAFLV (85 aa)) constitute a Core-binding (CB) domain. Residues 106–285 (HLPKNINAEQ…NFQHLAEVYD (180 aa)) enclose the Tyr recombinase domain. Residues R145, K169, H237, R240, and H263 contribute to the active site. Y272 functions as the O-(3'-phospho-DNA)-tyrosine intermediate in the catalytic mechanism.

Belongs to the 'phage' integrase family. XerC subfamily. As to quaternary structure, forms a cyclic heterotetrameric complex composed of two molecules of XerC and two molecules of XerD.

It is found in the cytoplasm. Site-specific tyrosine recombinase, which acts by catalyzing the cutting and rejoining of the recombining DNA molecules. The XerC-XerD complex is essential to convert dimers of the bacterial chromosome into monomers to permit their segregation at cell division. It also contributes to the segregational stability of plasmids. The sequence is that of Tyrosine recombinase XerC from Mannheimia succiniciproducens (strain KCTC 0769BP / MBEL55E).